We begin with the raw amino-acid sequence, 466 residues long: Glutamate--tRNA ligase 1 (466 aa).

The 'HIGH' region motif lies at 9–19 (PSPTGLLHIGN). The 'KMSKS' region signature appears at 238-242 (KLSKR). Lys241 contributes to the ATP binding site.

It belongs to the class-I aminoacyl-tRNA synthetase family. Glutamate--tRNA ligase type 1 subfamily. Monomer.

The protein localises to the cytoplasm. It carries out the reaction tRNA(Glu) + L-glutamate + ATP = L-glutamyl-tRNA(Glu) + AMP + diphosphate. Functionally, catalyzes the attachment of glutamate to tRNA(Glu) in a two-step reaction: glutamate is first activated by ATP to form Glu-AMP and then transferred to the acceptor end of tRNA(Glu). The sequence is that of Glutamate--tRNA ligase 1 from Gluconacetobacter diazotrophicus (strain ATCC 49037 / DSM 5601 / CCUG 37298 / CIP 103539 / LMG 7603 / PAl5).